A 794-amino-acid chain; its full sequence is Ribonucleoside-diphosphate reductase large subunit (794 aa).

The ATP-cone domain occupies 1–92 (MHVIKRDGGQ…VSNLHKETKK (92 aa)). ATP-binding positions include 5-6 (KR), 11-17 (EGVMFDK), T53, and D57. GDP contacts are provided by S202 and S217. A disulfide bond links C218 and C444. Residues 226–228 (DSI), K243, R256, and 263–264 (AG) contribute to the dTTP site. N427 is a binding site for GDP. N427 serves as the catalytic Proton acceptor. C429 acts as the Cysteine radical intermediate in catalysis. Residues E431 and 604 to 607 (TAST) contribute to the GDP site. Catalysis depends on E431, which acts as the Proton acceptor.

Belongs to the ribonucleoside diphosphate reductase large chain family. As to quaternary structure, heterodimer of a large and a small subunit.

It is found in the cytoplasm. The enzyme catalyses a 2'-deoxyribonucleoside 5'-diphosphate + [thioredoxin]-disulfide + H2O = a ribonucleoside 5'-diphosphate + [thioredoxin]-dithiol. Its activity is regulated as follows. Under complex allosteric control mediated by deoxynucleoside triphosphates and ATP binding to separate specificity and activation sites on the M1 subunit. The type of nucleotide bound at the specificity site determines substrate preference. It seems probable that ATP makes the enzyme reduce CDP and UDP, dGTP favors ADP reduction and dTTP favors GDP reduction. Stimulated by ATP and inhibited by dATP binding to the activity site. Provides the precursors necessary for DNA synthesis. Catalyzes the biosynthesis of deoxyribonucleotides from the corresponding ribonucleotides. The protein is Ribonucleoside-diphosphate reductase large subunit (rrm1) of Danio rerio (Zebrafish).